The sequence spans 736 residues: DNA topoisomerase 1 (736 aa).

Residues 2–113 (KHLIIVESPA…SYPRIVFHEI (112 aa)) form the Toprim domain. Glutamate 8 and aspartate 82 together coordinate Mg(2+). The Topo IA-type catalytic domain occupies 129–552 (DMFKVNAQQA…DFYYPFMDKI (424 aa)). Positions 163 to 168 (SAGRVQ) are interaction with DNA. The active-site O-(5'-phospho-DNA)-tyrosine intermediate is the tyrosine 297. 4 C4-type zinc fingers span residues 572–598 (CPKCGGELVKKNSRYGEFIACNNYPKC), 616–642 (CEKCGGEMVQKFSRNGAFLACNNYPEC), 663–689 (CPECGGDIALKRSKKGSFYGCNNYPKC), and 702–725 (CEKCHYLMSERIYRKKKAHECIQC).

This sequence belongs to the type IA topoisomerase family. Monomer. It depends on Mg(2+) as a cofactor.

It catalyses the reaction ATP-independent breakage of single-stranded DNA, followed by passage and rejoining.. In terms of biological role, releases the supercoiling and torsional tension of DNA, which is introduced during the DNA replication and transcription, by transiently cleaving and rejoining one strand of the DNA duplex. Introduces a single-strand break via transesterification at a target site in duplex DNA. The scissile phosphodiester is attacked by the catalytic tyrosine of the enzyme, resulting in the formation of a DNA-(5'-phosphotyrosyl)-enzyme intermediate and the expulsion of a 3'-OH DNA strand. The free DNA strand then undergoes passage around the unbroken strand, thus removing DNA supercoils. Finally, in the religation step, the DNA 3'-OH attacks the covalent intermediate to expel the active-site tyrosine and restore the DNA phosphodiester backbone. The chain is DNA topoisomerase 1 from Helicobacter pylori (strain J99 / ATCC 700824) (Campylobacter pylori J99).